Consider the following 1220-residue polypeptide: MEEGILLKKYVESSDKDIRYMALSDLAARLNDANHLKNLKLESFPDTLDVLLQALSDASPEVQQEAVRCVAIISSKIPQDKLKSTVENLLSGVAGKKSKNYLSALSLLLSNSNVQPFVNKFYTSTVFPSFLQILKQYNVAQEEFFAILCVVCDSLEIYHSNLSTLLPNNFELCIDVFQKCTTQCQRELIIKKACYLLSDVSLYGPRFAYKYIIEVLDRGLGPSTQMSEVNISIKLLNEILLSSKKEKDSSTSFISTAVADYTNKILSLLKKEEAPDELTQKLLEVLGLLLEYQQVNILKIWPELHGLLISKISYDPNLISDTNDEDDIADFLEEMSDYSSIYEDEEDVSWIVRRESLKVVLSVILSRLEYLPIVLQALGTSVVSKLNDREESVCLISIEVLKQAFLHVPRWIEVYATSNDRKRRYEGLPSDRSAISDTSIYLVSVIGKHVSKLSDKTPLSIVSELLNLVTVIFSSRDLGVQSEFSNLSSIIYRFPDFSTLDIKIKLNLVRLISAIISCGCEEIENMESKMSTILSLAVQNNYPQLSYEALITELSFCKYIHKKQPTNVSTDFSTMIDSSLQLLESKISDLKVRLALIDLVSQYVILFYEPDFDSIFLRRVLIILCKKLQEEPTRSAAARALCDIFMSVTDITKIENGTKIYEEILQDCCRHIDKSGNEFTTAYLELLEVLLKVGQKYLAESLLEHILGLLIETLKRNTENTVAILKCLLIIPLSILLKSKNLLIDTIISHLQSSTIHLNEESVCLLSRIIAVISKEEDLELIINSFTCAQKPVEEMVTLALIAAQLICIFQSKAIVTSLNKSFMSPKSEVRIKVFTTLIFGQLDYGKLTLPANEYFDTIASNLNSPNADVMKAAAIALGSLTSQSEKFIKELCALYVSDAYDKELLLISFLTFLKKSKIDYETADKIWDILSKDIENIKDFSTSPFRTLLSECLGLLICNESSSLYYKLELLSSSEASNHMLLSLSVFRFSLTLDCPKLKAYEKQFFEKAYKLFQNPDLEVSQETLQVIISVIKNRRSCIADVYNELLQGLISKSSVDSSNVHVVQMGPFQHVVDNSINQRQLVFETLYSLLDIPESLNHLTHFLQVSVMGLEDEHYIKLVSLSILEKLVDCSPSIIDEQVDTILEALRKIIELRKTEKTLKTDSDNILDLVRSALRVLFTMKLKCDNPVISEFESQVQKGPYSLEYEGIKNEIKTTIKT.

HEAT repeat units follow at residues 1-35 (MEEG…DANH), 42-79 (ESFP…KIPQ), 121-157 (FYTS…SLEI), 259-295 (ADYT…YQQV), 365-410 (LSRL…HVPR), 615-650 (IFLR…SVTD), 680-700 (TTAY…YLAE), 701-737 (SLLE…SILL), 738-775 (KSKN…VISK), 810-847 (FQSK…DYGK), 850-887 (LPAN…QSEK), and 1020-1057 (EVSQ…KSSV).

Belongs to the CAND family.

Its subcellular location is the nucleus. In terms of biological role, key assembly factor of SCF (SKP1-CUL1-F-box protein) E3 ubiquitin ligase complexes that promotes the exchange of the substrate-recognition F-box subunit in SCF complexes, thereby playing a key role in the cellular repertoire of SCF complexes. Acts as a F-box protein exchange factor. This Schizosaccharomyces pombe (strain 972 / ATCC 24843) (Fission yeast) protein is Cullin-associated NEDD8-dissociated protein 1 (knd1).